A 213-amino-acid chain; its full sequence is Redox-sensing transcriptional repressor Rex (213 aa).

The H-T-H motif DNA-binding region spans 17 to 56 (LYYRIFKRFYADQVEKASSKQIADAMGIDSATVRRDFSYF). 91-96 (GCGNIG) serves as a coordination point for NAD(+).

This sequence belongs to the transcriptional regulatory Rex family. As to quaternary structure, homodimer.

The protein localises to the cytoplasm. Functionally, modulates transcription in response to changes in cellular NADH/NAD(+) redox state. The chain is Redox-sensing transcriptional repressor Rex from Streptococcus uberis (strain ATCC BAA-854 / 0140J).